Reading from the N-terminus, the 130-residue chain is MYSGICICVFLAVLSASSFGQQTAGSHNGNPLAAELEQSLTEHHRHVRAPSSAGPLKPVPRLDGSIDQRANIGALLAKYLQQARKGPTGRISVMGNRVQSIDPTHRINDRDYMGWMDFGRRSAEEYEYSS.

Positions 1–20 (MYSGICICVFLAVLSASSFG) are cleaved as a signal peptide. Residues 21–48 (QQTAGSHNGNPLAAELEQSLTEHHRHVR) constitute a propeptide that is removed on maturation. The disordered stretch occupies residues 40–59 (LTEHHRHVRAPSSAGPLKPV). Tyrosine 112 carries the post-translational modification Sulfotyrosine. The residue at position 118 (phenylalanine 118) is a Phenylalanine amide. Residues 122 to 130 (SAEEYEYSS) constitute a propeptide that is removed on maturation. Residues tyrosine 126 and tyrosine 128 each carry the sulfotyrosine modification.

Belongs to the gastrin/cholecystokinin family. Post-translationally, the precursor is cleaved by proteases to produce a number of active cholecystokinins. In terms of tissue distribution, highly concentrated in the duodenum. Also localized in more distal parts of the small intestine.

It is found in the secreted. This peptide hormone induces gall bladder contraction and the release of pancreatic enzymes in the gut. Its function in the brain is not clear. This chain is Cholecystokinin (CCK), found in Struthio camelus (Common ostrich).